We begin with the raw amino-acid sequence, 311 residues long: D-allose-binding periplasmic protein (311 aa).

The signal sequence occupies residues Met-1 to Ala-23.

Belongs to the bacterial solute-binding protein 2 family.

The protein resides in the periplasm. Functionally, part of the binding-protein-dependent transport system AlsBAC for D-allose. The polypeptide is D-allose-binding periplasmic protein (alsB) (Escherichia coli (strain K12)).